Consider the following 364-residue polypeptide: Spermidine/putrescine import ATP-binding protein PotA (364 aa).

In terms of domain architecture, ABC transporter spans isoleucine 6 to isoleucine 236. Glycine 38–threonine 45 is a binding site for ATP.

It belongs to the ABC transporter superfamily. Spermidine/putrescine importer (TC 3.A.1.11.1) family. The complex is composed of two ATP-binding proteins (PotA), two transmembrane proteins (PotB and PotC) and a solute-binding protein (PotD).

The protein resides in the cell inner membrane. It catalyses the reaction ATP + H2O + polyamine-[polyamine-binding protein]Side 1 = ADP + phosphate + polyamineSide 2 + [polyamine-binding protein]Side 1.. In terms of biological role, part of the ABC transporter complex PotABCD involved in spermidine/putrescine import. Responsible for energy coupling to the transport system. The sequence is that of Spermidine/putrescine import ATP-binding protein PotA from Legionella pneumophila (strain Paris).